Consider the following 761-residue polypeptide: Xaa-Pro dipeptidyl-peptidase (761 aa).

Catalysis depends on charge relay system residues S349, D469, and H499.

Belongs to the peptidase S15 family. Homodimer.

The protein resides in the cytoplasm. It carries out the reaction Hydrolyzes Xaa-Pro-|- bonds to release unblocked, N-terminal dipeptides from substrates including Ala-Pro-|-p-nitroanilide and (sequentially) Tyr-Pro-|-Phe-Pro-|-Gly-Pro-|-Ile.. Functionally, removes N-terminal dipeptides sequentially from polypeptides having unsubstituted N-termini provided that the penultimate residue is proline. The polypeptide is Xaa-Pro dipeptidyl-peptidase (Streptococcus equi subsp. equi (strain 4047)).